Consider the following 475-residue polypeptide: UDP-N-acetylmuramate--L-alanine ligase (475 aa).

Gly117–Thr123 contacts ATP.

It belongs to the MurCDEF family.

The protein localises to the cytoplasm. The catalysed reaction is UDP-N-acetyl-alpha-D-muramate + L-alanine + ATP = UDP-N-acetyl-alpha-D-muramoyl-L-alanine + ADP + phosphate + H(+). The protein operates within cell wall biogenesis; peptidoglycan biosynthesis. Its function is as follows. Cell wall formation. The polypeptide is UDP-N-acetylmuramate--L-alanine ligase (Chlorobaculum tepidum (strain ATCC 49652 / DSM 12025 / NBRC 103806 / TLS) (Chlorobium tepidum)).